A 358-amino-acid chain; its full sequence is uncharacterized protein (358 aa).

The protein belongs to the methyltransferase superfamily.

This is an uncharacterized protein from Mycobacterium tuberculosis (strain CDC 1551 / Oshkosh).